The chain runs to 579 residues: 2-isopropylmalate synthase (579 aa).

Residues 40–314 form the Pyruvate carboxyltransferase domain; it reads PRWCAVDLRD…DPMIDFSDID (275 aa). The Mg(2+) site is built by aspartate 49, histidine 253, histidine 255, and asparagine 289. The interval 456–579 is regulatory domain; the sequence is SGKADGQWGR…VNRAIRDAQS (124 aa).

It belongs to the alpha-IPM synthase/homocitrate synthase family. LeuA type 2 subfamily. Homodimer. It depends on Mg(2+) as a cofactor.

It is found in the cytoplasm. It catalyses the reaction 3-methyl-2-oxobutanoate + acetyl-CoA + H2O = (2S)-2-isopropylmalate + CoA + H(+). It participates in amino-acid biosynthesis; L-leucine biosynthesis; L-leucine from 3-methyl-2-oxobutanoate: step 1/4. In terms of biological role, catalyzes the condensation of the acetyl group of acetyl-CoA with 3-methyl-2-oxobutanoate (2-ketoisovalerate) to form 3-carboxy-3-hydroxy-4-methylpentanoate (2-isopropylmalate). The protein is 2-isopropylmalate synthase of Pseudarthrobacter chlorophenolicus (strain ATCC 700700 / DSM 12829 / CIP 107037 / JCM 12360 / KCTC 9906 / NCIMB 13794 / A6) (Arthrobacter chlorophenolicus).